Here is a 78-residue protein sequence, read N- to C-terminus: Mitotic-spindle organizing protein 1 (78 aa).

At alanine 2 the chain carries N-acetylalanine.

The protein belongs to the MOZART1 family. Associates with the gamma-tubulin ring complex (gTuRC) consisting of TUBGCP2, TUBGCP3, TUBGCP4, TUBGCP5 and TUBGCP6 and gamma-tubulin TUBG1 or TUBG2; within the complex, interacts with TUBGCP3 and TUBGCP6 to form a luminal bridge with actin that stabilizes the initial structure during complex assembly. Interacts with TUBG1.

The protein localises to the cytoplasm. It localises to the cytoskeleton. Its subcellular location is the microtubule organizing center. The protein resides in the centrosome. It is found in the spindle. In terms of biological role, required for the recruitment and the assembly of the gamma-tubulin ring complex (gTuRC) at the centrosome. The gTuRC regulates the minus-end nucleation of alpha-beta tubulin heterodimers that grow into microtubule protafilaments, a critical step in centrosome duplication and spindle formation. This is Mitotic-spindle organizing protein 1 (Mzt1) from Mus musculus (Mouse).